A 960-amino-acid polypeptide reads, in one-letter code: Chromo domain-containing protein 1 (960 aa).

The Chromo domain maps to 22 to 74 (YEVEDILADRVNKNGINEYYIKWAGYDWYDNTWEPEQNLFGAEKVLKKWKKRK).

As to quaternary structure, ago1, chp1 and tas3 interact to form the core of the RNA-induced transcriptional silencing (RITS) complex. The RITS complex interacts with the RDRC complex via interaction between ago1 and hrr1. Clr4 has a role in mediating this interaction. Interacts with dri1.

Its subcellular location is the nucleus. The protein resides in the cytoplasm. It localises to the cytoskeleton. The protein localises to the microtubule organizing center. It is found in the spindle pole body. Component of the kinetochore which plays a role in stabilizing microtubules and so allowing accurate chromosome segregation. Has a role in the RNA interference (RNAi) pathway which is important for heterochromatin formation and accurate chromosome segregation. A member of the RNA-induced transcriptional silencing (RITS) complex which is involved in the biosynthesis of dsRNA from primer siRNAs provided by the RNA-directed RNA polymerase (RDRC) complex. This Schizosaccharomyces pombe (strain 972 / ATCC 24843) (Fission yeast) protein is Chromo domain-containing protein 1.